The sequence spans 108 residues: L-rhamnose mutarotase (108 aa).

Y19 serves as a coordination point for substrate. The Proton donor role is filled by H23. Residues Y45 and 80 to 81 (WW) contribute to the substrate site.

Belongs to the rhamnose mutarotase family. Homodimer.

Its subcellular location is the cytoplasm. It carries out the reaction alpha-L-rhamnose = beta-L-rhamnose. It participates in carbohydrate metabolism; L-rhamnose metabolism. Its function is as follows. Involved in the anomeric conversion of L-rhamnose. This chain is L-rhamnose mutarotase, found in Ligilactobacillus salivarius (strain UCC118) (Lactobacillus salivarius).